A 290-amino-acid chain; its full sequence is Fructose-1,6-bisphosphatase class 1 (290 aa).

Mg(2+)-binding residues include Glu-78, Asp-96, Leu-98, and Asp-99. Residues 99 to 102 (DGSS), Tyr-201, and Lys-226 contribute to the substrate site. Position 232 (Glu-232) interacts with Mg(2+).

It belongs to the FBPase class 1 family. In terms of assembly, homotetramer. Mg(2+) is required as a cofactor.

The protein resides in the cytoplasm. The enzyme catalyses beta-D-fructose 1,6-bisphosphate + H2O = beta-D-fructose 6-phosphate + phosphate. The protein operates within carbohydrate biosynthesis; gluconeogenesis. This is Fructose-1,6-bisphosphatase class 1 from Helicobacter pylori (strain HPAG1).